The following is a 208-amino-acid chain: Ras-related protein Rab6 (208 aa).

A GTP-binding site is contributed by 19-27; it reads GEQSVGKTS. The Effector region signature appears at 41–49; that stretch reads YQATIGIDF. Residues 67–71, 125–128, and 155–157 contribute to the GTP site; these read DTAGQ, NKTD, and SAK. The segment at 176 to 208 is disordered; that stretch reads MDSTENKPSEDMQEVVLKDSPNETKDPEGGCAC. Over residues 179–208 the composition is skewed to basic and acidic residues; it reads TENKPSEDMQEVVLKDSPNETKDPEGGCAC.

Belongs to the small GTPase superfamily. Rab family. In terms of assembly, interacts with Rich and Act5C. Interacts with BicD (via C-terminal domain). Interacts (in GTP-bound) with GCC1/CG10703 and cbs. Interacts with Gorab (via C-terminus); binds to a Gorab homodimer, this interaction seems to be required for trans-Golgi localization of Gorab. As to expression, expressed in larval eye, wing and leg imaginal disks and in salivary gland. Expressed in the larval optic lobe, showing an enrichment in the neuropil. In the adult brain, expressed in photoreceptors and mushroom body.

It localises to the golgi apparatus membrane. Its subcellular location is the synapse. It is found in the perikaryon. Protein transport. Regulator of membrane traffic from the Golgi apparatus towards the endoplasmic reticulum (ER). Mediates membrane trafficking during egg chamber growth and organization, possibly upstream of exocyst component Sec5. Also during oogenesis, plays a role, together with BicD but independently of Sec5, in the polarization of the oocyte microtubule cytoskeleton, in the localization of oskar mRNA and in the anterodorsal secretion of grk. Required for anterograde opsin transport through the ER-Golgi complex. Plays a role, together with Rich, in regulating CadN transport in photoreceptor cells which is required for the formation of normal synaptic connections between axons from the inner photoreceptor cells in the eye and postsynaptic cells in the brain medulla layer M6. Necessary for proper development of bristle shafts of macrochaete and microchaete on the head, thorax and scutellum. Modulates Notch signaling. As a key regulator of vesicular traffic, plays a critical role in the regulation of actin organization and is required for normal rates of phagocytic uptake during phagocytosis involved in defense against viral and fungal infection. This chain is Ras-related protein Rab6, found in Drosophila melanogaster (Fruit fly).